The chain runs to 904 residues: E3 ubiquitin-protein ligase HACE1 (904 aa).

ANK repeat units follow at residues 34 to 63 (AVYT…DVNY), 68 to 97 (VKRS…NPNY), 101 to 130 (SGCT…DVNI), 134 to 163 (EGLT…NVDV), 167 to 196 (MGQT…DINR), 200 to 230 (SGAT…YLPD), and 232 to 261 (NGVT…RLFQ). In terms of domain architecture, HECT spans 569–904 (SNEKLKQGIA…HCGSYGYTMA (336 aa)). Residue cysteine 871 is the Glycyl thioester intermediate of the active site.

Its subcellular location is the golgi apparatus. It is found in the golgi stack membrane. It localises to the cytoplasm. The protein resides in the endoplasmic reticulum. It catalyses the reaction S-ubiquitinyl-[E2 ubiquitin-conjugating enzyme]-L-cysteine + [acceptor protein]-L-lysine = [E2 ubiquitin-conjugating enzyme]-L-cysteine + N(6)-ubiquitinyl-[acceptor protein]-L-lysine.. It participates in protein modification; protein ubiquitination. E3 ubiquitin-protein ligase involved in Golgi membrane fusion and regulation of small GTPases. Acts as a regulator of Golgi membrane dynamics during the cell cycle: recruited to Golgi membrane by Rab proteins and regulates postmitotic Golgi membrane fusion. Acts by mediating ubiquitination during mitotic Golgi disassembly, ubiquitination serving as a signal for Golgi reassembly later, after cell division. The protein is E3 ubiquitin-protein ligase HACE1 (hace1) of Danio rerio (Zebrafish).